The sequence spans 359 residues: MKKYLALALIAPLLISCSTTKKGDTYNEAWVKDTNGFDILMGQFAHNIENIWGFKEVVIAGPKDYVKYTDQYQTRSHINFDDGTITIETIAGTEPAAHLRRAIIKTLLMGDDPSSVDLYSDVDDITISKEPFLYGQVVDNTGQPIRWEGRASNFADYLLKNRLQSRSNGLRIIYSVTINMVPNHLDKRAHKYLGMVRQASRKYGVDESLILAIMQTESSFNPYAVSRSDALGLMQVVQHTAGKDVFRSQGKSGTPSRSFLFDPASNIDTGTAYLAMLNNVYLGGIDNPTSRRYAVITAYNGGAGSVLRVFSNDKIQAANIINTMTPGDVYQTLTTRHPSAESRRYLYKVNTAQKSYRRR.

Positions 1–16 (MKKYLALALIAPLLIS) are cleaved as a signal peptide. Cysteine 17 carries the N-palmitoyl cysteine lipid modification. Cysteine 17 carries the S-diacylglycerol cysteine lipid modification.

It belongs to the transglycosylase Slt family.

The protein resides in the cell outer membrane. It carries out the reaction Exolytic cleavage of the (1-&gt;4)-beta-glycosidic linkage between N-acetylmuramic acid (MurNAc) and N-acetylglucosamine (GlcNAc) residues in peptidoglycan, from either the reducing or the non-reducing ends of the peptidoglycan chains, with concomitant formation of a 1,6-anhydrobond in the MurNAc residue.. Functionally, murein-degrading enzyme. May play a role in recycling of muropeptides during cell elongation and/or cell division. This is Membrane-bound lytic murein transglycosylase C from Escherichia coli O139:H28 (strain E24377A / ETEC).